Consider the following 737-residue polypeptide: Phosphoribosylformylglycinamidine synthase subunit PurL (737 aa).

Residue His50 is part of the active site. Tyr53 and Lys92 together coordinate ATP. Glu94 is a Mg(2+) binding site. Substrate-binding positions include 95–98 and Arg117; that span reads SHNH. His96 (proton acceptor) is an active-site residue. Residue Asp118 participates in Mg(2+) binding. Gln241 contacts substrate. Asp269 serves as a coordination point for Mg(2+). 313 to 315 is a substrate binding site; it reads ESQ. ATP-binding residues include Asp494 and Gly531. A Mg(2+)-binding site is contributed by Asn532. Ser534 provides a ligand contact to substrate.

It belongs to the FGAMS family. In terms of assembly, monomer. Part of the FGAM synthase complex composed of 1 PurL, 1 PurQ and 2 PurS subunits.

The protein localises to the cytoplasm. It carries out the reaction N(2)-formyl-N(1)-(5-phospho-beta-D-ribosyl)glycinamide + L-glutamine + ATP + H2O = 2-formamido-N(1)-(5-O-phospho-beta-D-ribosyl)acetamidine + L-glutamate + ADP + phosphate + H(+). Its pathway is purine metabolism; IMP biosynthesis via de novo pathway; 5-amino-1-(5-phospho-D-ribosyl)imidazole from N(2)-formyl-N(1)-(5-phospho-D-ribosyl)glycinamide: step 1/2. Functionally, part of the phosphoribosylformylglycinamidine synthase complex involved in the purines biosynthetic pathway. Catalyzes the ATP-dependent conversion of formylglycinamide ribonucleotide (FGAR) and glutamine to yield formylglycinamidine ribonucleotide (FGAM) and glutamate. The FGAM synthase complex is composed of three subunits. PurQ produces an ammonia molecule by converting glutamine to glutamate. PurL transfers the ammonia molecule to FGAR to form FGAM in an ATP-dependent manner. PurS interacts with PurQ and PurL and is thought to assist in the transfer of the ammonia molecule from PurQ to PurL. The polypeptide is Phosphoribosylformylglycinamidine synthase subunit PurL (Nitrobacter winogradskyi (strain ATCC 25391 / DSM 10237 / CIP 104748 / NCIMB 11846 / Nb-255)).